Reading from the N-terminus, the 128-residue chain is Small ribosomal subunit protein bS6 (128 aa).

It belongs to the bacterial ribosomal protein bS6 family.

In terms of biological role, binds together with bS18 to 16S ribosomal RNA. The polypeptide is Small ribosomal subunit protein bS6 (rpsF) (Thermotoga maritima (strain ATCC 43589 / DSM 3109 / JCM 10099 / NBRC 100826 / MSB8)).